The primary structure comprises 111 residues: Natriuretic peptide TNP-b (111 aa).

A signal peptide spans 1-27 (MVGLSRLAGGGLLLLLLLALLPLALDG). Positions 28 to 71 (KPAPLPQALPEALAGGTTALRRDVTEEQQQQLVAEESSGPAAGR) are excised as a propeptide. Disordered regions lie at residues 51 to 77 (VTEEQQQQLVAEESSGPAAGRSDPKIG) and 92 to 111 (SGLGCNRPVQNRPKQIPGGS). Residues Cys80 and Cys96 are joined by a disulfide bond. The propeptide occupies 107–111 (IPGGS).

Belongs to the natriuretic peptide family. In terms of tissue distribution, expressed by the venom gland.

The protein localises to the secreted. In terms of biological role, snake venom natriuretic peptide that exhibits vasoactive and probable hypotensive activity. Is only weakly active on natriuretic peptide receptor-C (NPR3). The chain is Natriuretic peptide TNP-b from Oxyuranus scutellatus scutellatus (Australian taipan).